The following is a 680-amino-acid chain: Probable galacturonosyltransferase 3 (680 aa).

Topologically, residues Met1–Thr6 are cytoplasmic. A helical; Signal-anchor for type II membrane protein membrane pass occupies residues Cys7–Leu27. Residues Glu28–Glu680 are Lumenal-facing. The tract at residues Ser118 to Asn146 is disordered. N-linked (GlcNAc...) asparagine glycans are attached at residues Asn121, Asn128, Asn135, Asn239, Asn386, Asn438, Asn545, Asn578, Asn610, and Asn631. Positions Ser130–Pro145 are enriched in polar residues.

Belongs to the glycosyltransferase 8 family. Expressed in roots, inflorescences, siliques, leaves and stems.

The protein resides in the golgi apparatus membrane. It functions in the pathway glycan metabolism; pectin biosynthesis. In terms of biological role, may be involved in pectin and/or xylans biosynthesis in cell walls. The protein is Probable galacturonosyltransferase 3 (GAUT3) of Arabidopsis thaliana (Mouse-ear cress).